Consider the following 945-residue polypeptide: Leucine--tRNA ligase (945 aa).

The 'HIGH' region signature appears at 43 to 53; it reads PYPNGAIHIGH. The 'KMSKS' region motif lies at 638–642; that stretch reads KMSKS. Lys641 is a binding site for ATP.

The protein belongs to the class-I aminoacyl-tRNA synthetase family.

The protein localises to the cytoplasm. It catalyses the reaction tRNA(Leu) + L-leucine + ATP = L-leucyl-tRNA(Leu) + AMP + diphosphate. The protein is Leucine--tRNA ligase of Pyrobaculum arsenaticum (strain DSM 13514 / JCM 11321 / PZ6).